A 187-amino-acid polypeptide reads, in one-letter code: Large ribosomal subunit protein uL5 (187 aa).

Belongs to the universal ribosomal protein uL5 family. As to quaternary structure, part of the 50S ribosomal subunit; part of the 5S rRNA/L5/L18/L25 subcomplex. Contacts the 5S rRNA and the P site tRNA. Forms a bridge to the 30S subunit in the 70S ribosome.

This is one of the proteins that bind and probably mediate the attachment of the 5S RNA into the large ribosomal subunit, where it forms part of the central protuberance. In the 70S ribosome it contacts protein S13 of the 30S subunit (bridge B1b), connecting the 2 subunits; this bridge is implicated in subunit movement. Contacts the P site tRNA; the 5S rRNA and some of its associated proteins might help stabilize positioning of ribosome-bound tRNAs. The polypeptide is Large ribosomal subunit protein uL5 (Mycolicibacterium smegmatis (strain ATCC 700084 / mc(2)155) (Mycobacterium smegmatis)).